A 435-amino-acid polypeptide reads, in one-letter code: Large ribosomal subunit protein mL65 (435 aa).

This sequence belongs to the mitochondrion-specific ribosomal protein mL65 family. As to quaternary structure, component of the mitochondrial ribosome small subunit (28S) which comprises a 12S rRNA and about 30 distinct proteins.

It is found in the mitochondrion. This is Large ribosomal subunit protein mL65 (MRPS30) from Bos taurus (Bovine).